A 176-amino-acid chain; its full sequence is Large ribosomal subunit protein bL12m (176 aa).

This sequence belongs to the bacterial ribosomal protein bL12 family. Component of the mitochondrial large ribosomal subunit (mt-LSU). Mature N.crassa 74S mitochondrial ribosomes consist of a small (37S) and a large (54S) subunit. The 37S small subunit contains a 16S ribosomal RNA (16S mt-rRNA) and 32 different proteins. The 54S large subunit contains a 23S rRNA (23S mt-rRNA) and 42 different proteins.

It localises to the mitochondrion. Functionally, component of the mitochondrial ribosome (mitoribosome), a dedicated translation machinery responsible for the synthesis of mitochondrial genome-encoded proteins, including at least some of the essential transmembrane subunits of the mitochondrial respiratory chain. The mitoribosomes are attached to the mitochondrial inner membrane and translation products are cotranslationally integrated into the membrane. The sequence is that of Large ribosomal subunit protein bL12m (mrpl12) from Neurospora crassa (strain ATCC 24698 / 74-OR23-1A / CBS 708.71 / DSM 1257 / FGSC 987).